We begin with the raw amino-acid sequence, 281 residues long: Fructose-bisphosphate aldolase class 1 (281 aa).

Catalysis depends on Lys191, which acts as the Schiff-base intermediate with dihydroxyacetone-P.

It belongs to the DeoC/FbaB aldolase family. In terms of assembly, homooctamer.

The protein resides in the cytoplasm. It localises to the chromosome. The catalysed reaction is beta-D-fructose 1,6-bisphosphate = D-glyceraldehyde 3-phosphate + dihydroxyacetone phosphate. With respect to regulation, activated by citrate. The polypeptide is Fructose-bisphosphate aldolase class 1 (fba) (Thermococcus kodakarensis (strain ATCC BAA-918 / JCM 12380 / KOD1) (Pyrococcus kodakaraensis (strain KOD1))).